The following is a 583-amino-acid chain: Alpha-1,3-arabinosyltransferase XAT2 (583 aa).

At 1–21 (MKPVERAKLVRSLRQESRRLR) the chain is on the cytoplasmic side. The chain crosses the membrane as a helical; Signal-anchor for type II membrane protein span at residues 22-42 (LLVLVIGFFLVTLTFVVISKP). At 43-583 (DALLFNLNGR…LLEVLDQLNQ (541 aa)) the chain is on the lumenal side. Positions 73–178 (RRSADTFPAA…NGKQEDGKPN (106 aa)) are disordered. Basic and acidic residues-rich tracts occupy residues 102–121 (TSEE…KNEE) and 135–146 (EDNKNGEEEGHT). Polar residues predominate over residues 149–160 (SKVTLPTVSNYT). N158 is a glycosylation site (N-linked (GlcNAc...) asparagine). The span at 162–178 (RDAEDTDNGKQEDGKPN) shows a compositional bias: basic and acidic residues. N-linked (GlcNAc...) asparagine glycans are attached at residues N229, N382, N450, and N485.

This sequence belongs to the glycosyltransferase 61 family.

The protein resides in the golgi apparatus membrane. It functions in the pathway glycan metabolism. Functionally, glycosyltransferase involved in the arabinosylation of xylan, the major hemicellulose (non-cellulosic component) of primary and secondary walls of angiosperms. Possesses alpha-1,3-arabinosyltransferase activity, transferring an arabinofuranose residue to the xylan backbone. The protein is Alpha-1,3-arabinosyltransferase XAT2 of Oryza sativa subsp. japonica (Rice).